Reading from the N-terminus, the 214-residue chain is Large ribosomal subunit protein bL25 (214 aa).

The protein belongs to the bacterial ribosomal protein bL25 family. CTC subfamily. Part of the 50S ribosomal subunit; part of the 5S rRNA/L5/L18/L25 subcomplex. Contacts the 5S rRNA. Binds to the 5S rRNA independently of L5 and L18.

This is one of the proteins that binds to the 5S RNA in the ribosome where it forms part of the central protuberance. In Polynucleobacter necessarius subsp. necessarius (strain STIR1), this protein is Large ribosomal subunit protein bL25.